The chain runs to 473 residues: MPDEVVTRFAPSPTGFLHIGGARTALFNWLFARHAGGRMLLRIEDTDRERSTDAAIAAILDGLSWLGLHWDGDVIYQFQRVARHRDVALSLLEAGQAYYCYATPQELEEMREQARKEGRPPRYDGRWRDRAENDAPSGVKPVIRLKAPRDGETTLDDKVQGKVTWANKDLDDLVLLRSDGTPTYMLAVVVDDHDMGVTQIIRGDDHLTNAARQMQIYQALGWSVPIMAHIPLIHGADGAKLSKRHGALGVDAYRGMGYLPEALRNYLVRLGWSQGDKEFFSTEEMIEAFDLAHVGRSPARFDFAKLENMNGHYLRHADDRHLVDMLSTTLPFLPKGLELAPKFTDERKAQLLAAMPGLKERAKTLVELLDGANFLFAERPLELDAKAQALLDASSRAHIAALVPLFEAAPEWKASALEAIVRAYVAETGVKLGQVAQPLRAALTGRATSPGIFDVLEVLGRDEGLARLRDQAG.

The 'HIGH' region motif lies at 11-21 (PSPTGFLHIGG). Residues 111 to 132 (REQARKEGRPPRYDGRWRDRAE) form a disordered region. The short motif at 240-244 (KLSKR) is the 'KMSKS' region element. K243 contacts ATP.

It belongs to the class-I aminoacyl-tRNA synthetase family. Glutamate--tRNA ligase type 1 subfamily. In terms of assembly, monomer.

The protein resides in the cytoplasm. The enzyme catalyses tRNA(Glu) + L-glutamate + ATP = L-glutamyl-tRNA(Glu) + AMP + diphosphate. Functionally, catalyzes the attachment of glutamate to tRNA(Glu) in a two-step reaction: glutamate is first activated by ATP to form Glu-AMP and then transferred to the acceptor end of tRNA(Glu). In Beijerinckia indica subsp. indica (strain ATCC 9039 / DSM 1715 / NCIMB 8712), this protein is Glutamate--tRNA ligase 1.